The sequence spans 398 residues: Serine/threonine-protein phosphatase 2A activator (398 aa).

Positions 137, 142, and 143 each coordinate ATP. Residues Gly-197 and Asp-203 each contribute to the Mg(2+) site. Residues Pro-293, Gln-296, and His-297 each contribute to the ATP site. A compositionally biased stretch (pro residues) spans 343 to 352 (PVATAPPPPA). A disordered region spans residues 343–398 (PVATAPPPPAESLSIEQNVGDSSSESSDNSVVLRPSTSSSSLVAAAEGSGDKPSKE). Residues 363–388 (DSSSESSDNSVVLRPSTSSSSLVAAA) are compositionally biased toward low complexity.

Belongs to the PTPA-type PPIase family. Associates with PP2A heterodimeric core enzyme PP2A(D), composed of a catalytic subunit (subunit C) and a constant regulatory subunit (PR65 or subunit A). Interacts with the catalytic subunit Pp4-19C of the serine/threonine-protein phosphatase 4 (PP4) complex; thereby mediating basal localization of the Miranda (Mira) complex; probably by facilitating the dephosphorylation of Mira.

The protein resides in the cytoplasm. Its subcellular location is the nucleus. The enzyme catalyses [protein]-peptidylproline (omega=180) = [protein]-peptidylproline (omega=0). Its function is as follows. PPIases accelerate the folding of proteins. It catalyzes the cis-trans isomerization of proline imidic peptide bonds in oligopeptides. Acts as a regulatory subunit for serine/threonine-protein phosphatase 2A (PP2A). Modulates PP2A activity or substrate specificity, probably by inducing a conformational change in the catalytic subunit, a proposed direct target of the PPIase. Acts as mediator for the basal localization of the Miranda (Mira) complex during mitosis of larval neuroblast asymmetric division. Associates with the phosphatase 4 (PP4) complex to mediate basal localization of Mira; probably by facilitating the dephosphorylation of Mira. Cortical association of Mira mediated by the PTPA-PP4 complex seems to be independent of aPKC activity. The polypeptide is Serine/threonine-protein phosphatase 2A activator (Drosophila melanogaster (Fruit fly)).